A 120-amino-acid chain; its full sequence is BolA-like protein 2 (120 aa).

This sequence belongs to the BolA/IbaG family. As to quaternary structure, interacts with FRA1, GRX3 and GRX4.

Its subcellular location is the cytoplasm. It localises to the nucleus. Its function is as follows. Involved in the regulation of the iron regulon in response to decreased mitochondrial iron-sulfur cluster synthesis. May be involved in mitochondrial organization and biogenesis. This chain is BolA-like protein 2 (BOL2), found in Saccharomyces cerevisiae (strain ATCC 204508 / S288c) (Baker's yeast).